The primary structure comprises 156 residues: Putative pre-16S rRNA nuclease (156 aa).

The protein belongs to the YqgF nuclease family.

The protein resides in the cytoplasm. Could be a nuclease involved in processing of the 5'-end of pre-16S rRNA. The sequence is that of Putative pre-16S rRNA nuclease from Bartonella tribocorum (strain CIP 105476 / IBS 506).